Here is a 403-residue protein sequence, read N- to C-terminus: Metacaspase-1A (403 aa).

The disordered stretch occupies residues 1–93; the sequence is MQHHHHSSYG…PPTDPVAFGH (93 aa). Over residues 18 to 31 the composition is skewed to low complexity; sequence GQAYRQQQPYYGQP. The span at 32 to 55 shows a compositional bias: pro residues; sequence SPQPYAQPPPPNYQRPSGYGPPPS. Residues His194 and Cys250 contribute to the active site.

It belongs to the peptidase C14B family.

Involved in cell death (apoptosis). The protein is Metacaspase-1A (casA) of Aspergillus terreus (strain NIH 2624 / FGSC A1156).